We begin with the raw amino-acid sequence, 176 residues long: Large ribosomal subunit protein bL17m (176 aa).

A mitochondrion-targeting transit peptide spans 1 to 8 (MRLSLAAA).

Belongs to the bacterial ribosomal protein bL17 family. As to quaternary structure, component of the mitochondrial ribosome large subunit (39S) which comprises a 16S rRNA and about 50 distinct proteins.

The protein localises to the mitochondrion. The protein is Large ribosomal subunit protein bL17m (Mrpl17) of Mus musculus (Mouse).